The sequence spans 479 residues: DNA polymerase IV (479 aa).

Residues 7–189 form the UmuC domain; it reads ILHLDMDAFF…MTVRTLPGVG (183 aa). 2 residues coordinate Mg(2+): Asp-11 and Asp-105. Residue Glu-106 is part of the active site. Disordered stretches follow at residues 357–400 and 430–479; these read AGDR…GHGW and DPEL…TSRP. The segment covering 381-396 has biased composition (basic and acidic residues); that stretch reads AERRWPSGHDVRHTEL.

This sequence belongs to the DNA polymerase type-Y family. In terms of assembly, monomer. The cofactor is Mg(2+).

The protein resides in the cytoplasm. It carries out the reaction DNA(n) + a 2'-deoxyribonucleoside 5'-triphosphate = DNA(n+1) + diphosphate. Its function is as follows. Poorly processive, error-prone DNA polymerase involved in untargeted mutagenesis. Copies undamaged DNA at stalled replication forks, which arise in vivo from mismatched or misaligned primer ends. These misaligned primers can be extended by PolIV. Exhibits no 3'-5' exonuclease (proofreading) activity. May be involved in translesional synthesis, in conjunction with the beta clamp from PolIII. The chain is DNA polymerase IV from Streptomyces coelicolor (strain ATCC BAA-471 / A3(2) / M145).